The primary structure comprises 319 residues: Large ribosomal subunit protein uL29m (319 aa).

The interval 1-55 (MWKRSFHSQGGPLRARTKFTKPKPKQPVLPKDKIRPPTQLTHHSNNLRITEPIPP) is disordered. Residues 15 to 24 (ARTKFTKPKP) show a composition bias toward basic residues. Positions 38 to 48 (TQLTHHSNNLR) are enriched in polar residues.

This sequence belongs to the universal ribosomal protein uL29 family. Component of the mitochondrial large ribosomal subunit. Mature mitochondrial ribosomes consist of a small (37S) and a large (54S) subunit. The 37S subunit contains at least 33 different proteins and 1 molecule of RNA (15S). The 54S subunit contains at least 45 different proteins and 1 molecule of RNA (21S).

It is found in the mitochondrion. This Saccharomyces cerevisiae (strain YJM789) (Baker's yeast) protein is Large ribosomal subunit protein uL29m (MRPL4).